The primary structure comprises 199 residues: Dephospho-CoA kinase (199 aa).

The DPCK domain occupies 3–199 (RIGLTGGIGS…HCKYLQIAQT (197 aa)). An ATP-binding site is contributed by 11 to 16 (GSGKST).

This sequence belongs to the CoaE family.

The protein localises to the cytoplasm. It catalyses the reaction 3'-dephospho-CoA + ATP = ADP + CoA + H(+). The protein operates within cofactor biosynthesis; coenzyme A biosynthesis; CoA from (R)-pantothenate: step 5/5. Catalyzes the phosphorylation of the 3'-hydroxyl group of dephosphocoenzyme A to form coenzyme A. In Coxiella burnetii (strain RSA 493 / Nine Mile phase I), this protein is Dephospho-CoA kinase.